The sequence spans 641 residues: Serine/threonine-protein kinase pink-1, mitochondrial (641 aa).

A mitochondrion-targeting transit peptide spans 1–74 (MSMKRFGKAA…TRHGRVFRPF (74 aa)). Positions 137 to 483 (YEFGEFLGQG…AANALNLSLF (347 aa)) constitute a Protein kinase domain. Residues 143-151 (LGQGCNAAV) and K199 contribute to the ATP site. The active-site Proton acceptor is D338.

Belongs to the protein kinase superfamily. Ser/Thr protein kinase family. Mg(2+) serves as cofactor. Autophosphorylated.

Its subcellular location is the mitochondrion. The catalysed reaction is L-seryl-[protein] + ATP = O-phospho-L-seryl-[protein] + ADP + H(+). It carries out the reaction L-threonyl-[protein] + ATP = O-phospho-L-threonyl-[protein] + ADP + H(+). Protects against mitochondrial dysfunction during cellular stress, potentially by phosphorylating mitochondrial proteins. Plays a role in mitophagy. The chain is Serine/threonine-protein kinase pink-1, mitochondrial (pink-1) from Caenorhabditis elegans.